We begin with the raw amino-acid sequence, 237 residues long: Phosphoribosylaminoimidazole-succinocarboxamide synthase (237 aa).

The protein belongs to the SAICAR synthetase family.

It catalyses the reaction 5-amino-1-(5-phospho-D-ribosyl)imidazole-4-carboxylate + L-aspartate + ATP = (2S)-2-[5-amino-1-(5-phospho-beta-D-ribosyl)imidazole-4-carboxamido]succinate + ADP + phosphate + 2 H(+). The protein operates within purine metabolism; IMP biosynthesis via de novo pathway; 5-amino-1-(5-phospho-D-ribosyl)imidazole-4-carboxamide from 5-amino-1-(5-phospho-D-ribosyl)imidazole-4-carboxylate: step 1/2. This chain is Phosphoribosylaminoimidazole-succinocarboxamide synthase, found in Psychrobacter arcticus (strain DSM 17307 / VKM B-2377 / 273-4).